A 1213-amino-acid chain; its full sequence is DNA-directed RNA polymerase subunit beta (1213 aa).

A disordered region spans residues 1169-1213 (SRMAEEQEKKKLAEETGKSGDKKENKKDADKPVAPADESDDKVSK). Residues 1171 to 1199 (MAEEQEKKKLAEETGKSGDKKENKKDADK) are compositionally biased toward basic and acidic residues.

It belongs to the RNA polymerase beta chain family. The RNAP catalytic core consists of 2 alpha, 1 beta, 1 beta' and 1 omega subunit. When a sigma factor is associated with the core the holoenzyme is formed, which can initiate transcription.

The enzyme catalyses RNA(n) + a ribonucleoside 5'-triphosphate = RNA(n+1) + diphosphate. Its function is as follows. DNA-dependent RNA polymerase catalyzes the transcription of DNA into RNA using the four ribonucleoside triphosphates as substrates. The sequence is that of DNA-directed RNA polymerase subunit beta from Lactobacillus helveticus (strain DPC 4571).